A 97-amino-acid chain; its full sequence is Large ribosomal subunit protein bL28 (97 aa).

This sequence belongs to the bacterial ribosomal protein bL28 family.

This chain is Large ribosomal subunit protein bL28, found in Rickettsia bellii (strain OSU 85-389).